The following is a 79-amino-acid chain: RNA-binding protein KhpA (79 aa).

In terms of domain architecture, KH spans 32-79 (TVVIELRVDPAELGKVIGKQGRIARALRTILTAIGRKIGKRVVLEILE).

This sequence belongs to the KhpA RNA-binding protein family.

Its subcellular location is the cytoplasm. In terms of biological role, a probable RNA-binding protein. This Aquifex aeolicus (strain VF5) protein is RNA-binding protein KhpA.